Reading from the N-terminus, the 155-residue chain is RNA pyrophosphohydrolase (155 aa).

The Nudix hydrolase domain occupies 5 to 147 (KYRPNVAAII…KRQVYRQVIA (143 aa)). Residues 42–63 (GGIDEGETPLEALHRELLEEIG) carry the Nudix box motif.

The protein belongs to the Nudix hydrolase family. RppH subfamily. Requires a divalent metal cation as cofactor.

Its function is as follows. Accelerates the degradation of transcripts by removing pyrophosphate from the 5'-end of triphosphorylated RNA, leading to a more labile monophosphorylated state that can stimulate subsequent ribonuclease cleavage. This Helicobacter pylori (strain G27) protein is RNA pyrophosphohydrolase.